The chain runs to 380 residues: tRNA-specific 2-thiouridylase MnmA (380 aa).

Residues 9–16 (GVSGGVDS) and methionine 35 each bind ATP. An interaction with target base in tRNA region spans residues 94–96 (NPD). The Nucleophile role is filled by cysteine 99. The cysteines at positions 99 and 195 are disulfide-linked. Residue glycine 123 coordinates ATP. An interaction with tRNA region spans residues 145–147 (KDQ). The Cysteine persulfide intermediate role is filled by cysteine 195. The interaction with tRNA stretch occupies residues 308-309 (RY).

The protein belongs to the MnmA/TRMU family.

The protein localises to the cytoplasm. It carries out the reaction S-sulfanyl-L-cysteinyl-[protein] + uridine(34) in tRNA + AH2 + ATP = 2-thiouridine(34) in tRNA + L-cysteinyl-[protein] + A + AMP + diphosphate + H(+). Catalyzes the 2-thiolation of uridine at the wobble position (U34) of tRNA, leading to the formation of s(2)U34. This Stenotrophomonas maltophilia (strain R551-3) protein is tRNA-specific 2-thiouridylase MnmA.